A 358-amino-acid chain; its full sequence is 4-hydroxy-3-methylbut-2-en-1-yl diphosphate synthase (flavodoxin) (358 aa).

[4Fe-4S] cluster-binding residues include cysteine 265, cysteine 268, cysteine 300, and glutamate 307.

The protein belongs to the IspG family. [4Fe-4S] cluster is required as a cofactor.

The catalysed reaction is (2E)-4-hydroxy-3-methylbut-2-enyl diphosphate + oxidized [flavodoxin] + H2O + 2 H(+) = 2-C-methyl-D-erythritol 2,4-cyclic diphosphate + reduced [flavodoxin]. The protein operates within isoprenoid biosynthesis; isopentenyl diphosphate biosynthesis via DXP pathway; isopentenyl diphosphate from 1-deoxy-D-xylulose 5-phosphate: step 5/6. Converts 2C-methyl-D-erythritol 2,4-cyclodiphosphate (ME-2,4cPP) into 1-hydroxy-2-methyl-2-(E)-butenyl 4-diphosphate. In Maridesulfovibrio salexigens (strain ATCC 14822 / DSM 2638 / NCIMB 8403 / VKM B-1763) (Desulfovibrio salexigens), this protein is 4-hydroxy-3-methylbut-2-en-1-yl diphosphate synthase (flavodoxin).